We begin with the raw amino-acid sequence, 932 residues long: DNA mismatch repair protein MutS (932 aa).

615 to 622 is a binding site for ATP; the sequence is GPNMAGKS.

Belongs to the DNA mismatch repair MutS family.

In terms of biological role, this protein is involved in the repair of mismatches in DNA. It is possible that it carries out the mismatch recognition step. This protein has a weak ATPase activity. The polypeptide is DNA mismatch repair protein MutS (Clostridium botulinum (strain Langeland / NCTC 10281 / Type F)).